The sequence spans 463 residues: Trigger factor (463 aa).

The region spanning 162 to 243 (GDHVSIDLSA…VHSVKLKELP (82 aa)) is the PPIase FKBP-type domain. Positions 427-444 (SGNTIEPPTPVHTETITV) are enriched in polar residues. A disordered region spans residues 427-463 (SGNTIEPPTPVHTETITVASGDEETEESAAEQGETEK).

Belongs to the FKBP-type PPIase family. Tig subfamily.

Its subcellular location is the cytoplasm. It catalyses the reaction [protein]-peptidylproline (omega=180) = [protein]-peptidylproline (omega=0). Its function is as follows. Involved in protein export. Acts as a chaperone by maintaining the newly synthesized protein in an open conformation. Functions as a peptidyl-prolyl cis-trans isomerase. This chain is Trigger factor, found in Thermobifida fusca (strain YX).